A 376-amino-acid polypeptide reads, in one-letter code: Putative glutamate--cysteine ligase 2-3 (376 aa).

The protein belongs to the glutamate--cysteine ligase type 2 family. YbdK subfamily.

It carries out the reaction L-cysteine + L-glutamate + ATP = gamma-L-glutamyl-L-cysteine + ADP + phosphate + H(+). Functionally, ATP-dependent carboxylate-amine ligase which exhibits weak glutamate--cysteine ligase activity. This Nocardioides sp. (strain ATCC BAA-499 / JS614) protein is Putative glutamate--cysteine ligase 2-3.